We begin with the raw amino-acid sequence, 432 residues long: Isocitrate lyase (432 aa).

The disordered stretch occupies residues 1 to 24 (MSNVGKPRTAQEIQQDWDTNPRWN). The span at 11-22 (QEIQQDWDTNPR) shows a compositional bias: polar residues. 93-95 (SGW) contacts substrate. Asp-155 is a binding site for Mg(2+). The Proton acceptor role is filled by Cys-193. Residues 194-195 (GH), Arg-230, 315-319 (NCSPS), and Thr-349 contribute to the substrate site.

Belongs to the isocitrate lyase/PEP mutase superfamily. Isocitrate lyase family. In terms of assembly, homotetramer. The cofactor is Mg(2+).

It carries out the reaction D-threo-isocitrate = glyoxylate + succinate. Its pathway is carbohydrate metabolism; glyoxylate cycle; (S)-malate from isocitrate: step 1/2. With respect to regulation, inhibited by 3-phosphoglycerate, 6-phosphogluconate, phosphoenolpyruvate (PEP), fructose 1,6-bisphosphate, glycolate, oxalate, and itaconate. Functionally, involved in the metabolic adaptation in response to environmental changes. Catalyzes the reversible formation of succinate and glyoxylate from isocitrate, a key step of the glyoxylate cycle, which operates as an anaplerotic route for replenishing the tricarboxylic acid cycle during growth on fatty acid substrates. The sequence is that of Isocitrate lyase from Corynebacterium glutamicum (strain ATCC 13032 / DSM 20300 / JCM 1318 / BCRC 11384 / CCUG 27702 / LMG 3730 / NBRC 12168 / NCIMB 10025 / NRRL B-2784 / 534).